Here is a 230-residue protein sequence, read N- to C-terminus: Complex I assembly factor TMEM126B, mitochondrial (230 aa).

4 consecutive transmembrane segments (helical) span residues 70 to 92 (LNIHGTLVFGTSSSLSGIMANLV), 107 to 126 (YASLTTLPVLATIVSYKLFV), 139 to 161 (SCVLRSALIGMACGVSYPSALAF), and 196 to 218 (AMAIPLFFQIVMGAFTGLHHYNI).

This sequence belongs to the TMEM126 family. Part of the mitochondrial complex I assembly/MCIA complex that comprises at least the core subunits TMEM126B, NDUFAF1, ECSIT and ACAD9 and complement subunits such as COA1 and TMEM186. Associates with the intermediate 370 kDa subcomplex of incompletely assembled complex I. Interacts with TMEM70.

It is found in the mitochondrion membrane. As part of the MCIA complex, involved in the assembly of the mitochondrial complex I. Participates in constructing the membrane arm of complex I. The protein is Complex I assembly factor TMEM126B, mitochondrial of Mus musculus (Mouse).